We begin with the raw amino-acid sequence, 145 residues long: D-aminoacyl-tRNA deacylase (145 aa).

The Gly-cisPro motif, important for rejection of L-amino acids signature appears at 137–138 (GP).

Belongs to the DTD family. Homodimer.

The protein resides in the cytoplasm. The catalysed reaction is glycyl-tRNA(Ala) + H2O = tRNA(Ala) + glycine + H(+). It catalyses the reaction a D-aminoacyl-tRNA + H2O = a tRNA + a D-alpha-amino acid + H(+). Its function is as follows. An aminoacyl-tRNA editing enzyme that deacylates mischarged D-aminoacyl-tRNAs. Also deacylates mischarged glycyl-tRNA(Ala), protecting cells against glycine mischarging by AlaRS. Acts via tRNA-based rather than protein-based catalysis; rejects L-amino acids rather than detecting D-amino acids in the active site. By recycling D-aminoacyl-tRNA to D-amino acids and free tRNA molecules, this enzyme counteracts the toxicity associated with the formation of D-aminoacyl-tRNA entities in vivo and helps enforce protein L-homochirality. The protein is D-aminoacyl-tRNA deacylase of Pectobacterium carotovorum subsp. carotovorum (strain PC1).